Consider the following 362-residue polypeptide: RING finger protein 32 (362 aa).

The RING-type 1; atypical zinc finger occupies 127–169; the sequence is CPICKEEFELRPQVLLSCSHVFHKACLQAFEKFTNKKTCPLCR. In terms of domain architecture, IQ spans 186-215; the sequence is RIKCVTRIQAYWRGCVVRKWYRNLRKTVPP. Residues 293–352 form an RING-type 2; atypical zinc finger; it reads CSICLAPLSAAGGQRVGAGRRSREMALLSCSHVFHHACLLALEEFSVGDRPPFHACPLCR.

In terms of tissue distribution, highly expressed in testis, less abundant in ovary.

It is found in the cytoplasm. Functionally, may play a role in sperm formation. The chain is RING finger protein 32 (RNF32) from Homo sapiens (Human).